Consider the following 297-residue polypeptide: tRNA pseudouridine synthase B (297 aa).

Residue Asp-39 is the Nucleophile of the active site.

The protein belongs to the pseudouridine synthase TruB family. Type 1 subfamily.

It catalyses the reaction uridine(55) in tRNA = pseudouridine(55) in tRNA. Functionally, responsible for synthesis of pseudouridine from uracil-55 in the psi GC loop of transfer RNAs. The sequence is that of tRNA pseudouridine synthase B from Lactobacillus gasseri (strain ATCC 33323 / DSM 20243 / BCRC 14619 / CIP 102991 / JCM 1131 / KCTC 3163 / NCIMB 11718 / NCTC 13722 / AM63).